Consider the following 357-residue polypeptide: 4-hydroxy-3-methylbut-2-en-1-yl diphosphate synthase (flavodoxin) (357 aa).

[4Fe-4S] cluster contacts are provided by Cys-264, Cys-267, Cys-299, and Glu-306.

This sequence belongs to the IspG family. It depends on [4Fe-4S] cluster as a cofactor.

The catalysed reaction is (2E)-4-hydroxy-3-methylbut-2-enyl diphosphate + oxidized [flavodoxin] + H2O + 2 H(+) = 2-C-methyl-D-erythritol 2,4-cyclic diphosphate + reduced [flavodoxin]. The protein operates within isoprenoid biosynthesis; isopentenyl diphosphate biosynthesis via DXP pathway; isopentenyl diphosphate from 1-deoxy-D-xylulose 5-phosphate: step 5/6. Functionally, converts 2C-methyl-D-erythritol 2,4-cyclodiphosphate (ME-2,4cPP) into 1-hydroxy-2-methyl-2-(E)-butenyl 4-diphosphate. This Campylobacter jejuni subsp. jejuni serotype O:2 (strain ATCC 700819 / NCTC 11168) protein is 4-hydroxy-3-methylbut-2-en-1-yl diphosphate synthase (flavodoxin).